A 243-amino-acid polypeptide reads, in one-letter code: Triosephosphate isomerase (243 aa).

9-11 (NWK) contributes to the substrate binding site. Residue His-96 is the Electrophile of the active site. Glu-165 acts as the Proton acceptor in catalysis. Substrate contacts are provided by residues Gly-171, Ser-204, and 225–226 (GG).

This sequence belongs to the triosephosphate isomerase family. Homodimer.

The protein resides in the cytoplasm. The catalysed reaction is D-glyceraldehyde 3-phosphate = dihydroxyacetone phosphate. It functions in the pathway carbohydrate biosynthesis; gluconeogenesis. The protein operates within carbohydrate degradation; glycolysis; D-glyceraldehyde 3-phosphate from glycerone phosphate: step 1/1. Involved in the gluconeogenesis. Catalyzes stereospecifically the conversion of dihydroxyacetone phosphate (DHAP) to D-glyceraldehyde-3-phosphate (G3P). This is Triosephosphate isomerase from Nostoc punctiforme (strain ATCC 29133 / PCC 73102).